We begin with the raw amino-acid sequence, 272 residues long: MPELPEVETSRLGITPHLQGQTIKAIVVRTDKLRWPIPQELQKLVGQRVQSIRRRAKYLMIDTPKGSAIIHLGMSGSLRVLDEEVPSAKHDHVDLVLENGKVLRYNDPRKFGAWLYSEVGVAHQVLSKLGPEPLTNEFNSEYFAEKAKNKKTVVKQFIMNNAVVVGVGNIYASESLFMAQIHPKTSVGSLKASQITLLVAEIKKVLETAIKQGGTTLKDFNQVDGKPGYFAQELHVYGRAKKKCLLCSSIIQEEKIGQRNTFWCGHCQPFNK.

Pro2 serves as the catalytic Schiff-base intermediate with DNA. Glu3 (proton donor) is an active-site residue. Catalysis depends on Lys57, which acts as the Proton donor; for beta-elimination activity. The DNA site is built by His90, Arg109, and Lys150. Residues 235–269 (HVYGRAKKKCLLCSSIIQEEKIGQRNTFWCGHCQP) form an FPG-type zinc finger. The active-site Proton donor; for delta-elimination activity is Arg259.

Belongs to the FPG family. As to quaternary structure, monomer. Zn(2+) serves as cofactor.

It catalyses the reaction Hydrolysis of DNA containing ring-opened 7-methylguanine residues, releasing 2,6-diamino-4-hydroxy-5-(N-methyl)formamidopyrimidine.. The enzyme catalyses 2'-deoxyribonucleotide-(2'-deoxyribose 5'-phosphate)-2'-deoxyribonucleotide-DNA = a 3'-end 2'-deoxyribonucleotide-(2,3-dehydro-2,3-deoxyribose 5'-phosphate)-DNA + a 5'-end 5'-phospho-2'-deoxyribonucleoside-DNA + H(+). Involved in base excision repair of DNA damaged by oxidation or by mutagenic agents. Acts as a DNA glycosylase that recognizes and removes damaged bases. Has a preference for oxidized purines, such as 7,8-dihydro-8-oxoguanine (8-oxoG). Has AP (apurinic/apyrimidinic) lyase activity and introduces nicks in the DNA strand. Cleaves the DNA backbone by beta-delta elimination to generate a single-strand break at the site of the removed base with both 3'- and 5'-phosphates. The polypeptide is Formamidopyrimidine-DNA glycosylase (Aliivibrio fischeri (strain ATCC 700601 / ES114) (Vibrio fischeri)).